Reading from the N-terminus, the 185-residue chain is UPF0397 protein CPR_1556 (185 aa).

Transmembrane regions (helical) follow at residues 11–31 (IVAIGIGSAVFMILGRFGSLP), 44–64 (AFLSLMALLYGPLAGFLIGFI), 71–91 (IVFFGSPWISWVFASGIVGLI), 111–131 (IFMFNLIQIIANGVAWFLVAP), and 149–169 (GVIGGISNMITVGVLGTVLIS).

This sequence belongs to the UPF0397 family.

It localises to the cell membrane. This chain is UPF0397 protein CPR_1556, found in Clostridium perfringens (strain SM101 / Type A).